A 265-amino-acid polypeptide reads, in one-letter code: Short chain dehydrogenase mdpC (265 aa).

I25, N98, and R131 together coordinate NADP(+). Catalysis depends on proton donor residues S147 and S148. Y162, K166, and T197 together coordinate NADP(+). Residue Y162 is the Proton acceptor of the active site. Residue K166 is the Lowers pKa of active site Tyr of the active site.

This sequence belongs to the short-chain dehydrogenases/reductases (SDR) family.

It carries out the reaction 3,8,9,10-tetrahydroxy-6-methyl-1,4-dihydroanthracen-1-one + NADPH + H(+) = (3R)-3,8,9,10-tetrahydroxy-6-methyl-1,2,3,4-tetrahydroanthracen-1-one + NADP(+). Its pathway is secondary metabolite biosynthesis. Functionally, short chain dehydrogenase; part of the gene cluster that mediates the biosynthesis of monodictyphenone, a prenyl xanthone derivative. The pathway begins with the synthesis of atrochrysone thioester by the polyketide synthase (PKS) mdpG. The atrochrysone carboxyl ACP thioesterase mdpF then breaks the thioester bond and releases the atrochrysone carboxylic acid from mdpG. The atrochrysone carboxylic acid is then converted to atrochrysone which is further transformed into emodin anthrone. The next step is performed by the anthrone oxygenase mdpH that catalyzes the oxidation of emodinanthrone to emodin. Emodin is further modified to yield monodictyphenone via several steps involving mdpB, mdpC mdpJ, mdpK and mdpL. The short chain dehydrogenase mdpC converts the tautomers of emodin hydroquinone into the 3-hydroxy-3,4-dihydroan-thracen-1(2H)-one derivative. These enzymes with xptA, xptB and xptC are also proposed to be involved in the synthesis of shamixanthone from emodin. Especially, direct reduction of emodin by the short chain dehydrogenase mdpC followed by dehydration catalyzed by the scytalone dehydratase-like protein mdpB gives loss of oxygen and formation of chrysophanol intermediate in two simple steps. The chain is Short chain dehydrogenase mdpC from Emericella nidulans (strain FGSC A4 / ATCC 38163 / CBS 112.46 / NRRL 194 / M139) (Aspergillus nidulans).